We begin with the raw amino-acid sequence, 474 residues long: Methylenetetrahydrofolate--tRNA-(uracil-5-)-methyltransferase TrmFO (474 aa).

15–20 is a binding site for FAD; sequence GAGLAG. The segment at 453–474 is disordered; that stretch reads PLLPTAPDTTGAAGEETTQAES.

It belongs to the MnmG family. TrmFO subfamily. The cofactor is FAD.

The protein resides in the cytoplasm. It catalyses the reaction uridine(54) in tRNA + (6R)-5,10-methylene-5,6,7,8-tetrahydrofolate + NADH + H(+) = 5-methyluridine(54) in tRNA + (6S)-5,6,7,8-tetrahydrofolate + NAD(+). The enzyme catalyses uridine(54) in tRNA + (6R)-5,10-methylene-5,6,7,8-tetrahydrofolate + NADPH + H(+) = 5-methyluridine(54) in tRNA + (6S)-5,6,7,8-tetrahydrofolate + NADP(+). In terms of biological role, catalyzes the folate-dependent formation of 5-methyl-uridine at position 54 (M-5-U54) in all tRNAs. This chain is Methylenetetrahydrofolate--tRNA-(uracil-5-)-methyltransferase TrmFO, found in Nitratidesulfovibrio vulgaris (strain ATCC 29579 / DSM 644 / CCUG 34227 / NCIMB 8303 / VKM B-1760 / Hildenborough) (Desulfovibrio vulgaris).